The sequence spans 443 residues: Tol-Pal system protein TolB (443 aa).

Positions Met1–Ala33 are cleaved as a signal peptide.

Belongs to the TolB family. In terms of assembly, the Tol-Pal system is composed of five core proteins: the inner membrane proteins TolA, TolQ and TolR, the periplasmic protein TolB and the outer membrane protein Pal. They form a network linking the inner and outer membranes and the peptidoglycan layer.

The protein localises to the periplasm. Part of the Tol-Pal system, which plays a role in outer membrane invagination during cell division and is important for maintaining outer membrane integrity. In Brucella canis (strain ATCC 23365 / NCTC 10854 / RM-666), this protein is Tol-Pal system protein TolB.